A 47-amino-acid chain; its full sequence is uncharacterized protein (47 aa).

This is an uncharacterized protein from Bacillus subtilis (strain 168).